The sequence spans 504 residues: Probable cytochrome P450 513E1 (504 aa).

The helical transmembrane segment at 1–21 (MNLYISILILIISLIIFFKNN) threads the bilayer. Position 450 (Cys-450) interacts with heme.

It belongs to the cytochrome P450 family. Requires heme as cofactor.

It is found in the membrane. The protein is Probable cytochrome P450 513E1 (cyp513E1) of Dictyostelium discoideum (Social amoeba).